Consider the following 308-residue polypeptide: V-type immunoglobulin domain-containing suppressor of T-cell activation (308 aa).

An N-terminal signal peptide occupies residues 1 to 32 (MGVPAVPEASSPRWGTLLLAIFLAASRGLVAA). Residues 33-167 (FKVTTPYSLY…RFYGSMELQV (135 aa)) enclose the Ig-like V-type domain. Over 33–191 (FKVTTPYSLY…EQDSDSITAA (159 aa)) the chain is Extracellular. N49, N91, and N127 each carry an N-linked (GlcNAc...) asparagine glycan. Residues C54 and C145 are joined by a disulfide bond. A helical transmembrane segment spans residues 192–212 (ALATGACIVGILCLPLILLLV). Residues 213 to 308 (YKQRQVASHR…VPDSPNSEAI (96 aa)) are Cytoplasmic-facing. The tract at residues 230-308 (MDSNTQGIEN…VPDSPNSEAI (79 aa)) is disordered. S232 bears the Phosphoserine mark.

In terms of processing, at the cell surface, may be cleaved by MMP14. Post-translationally, N-glycosylated. Expressed in spleen, thymus, bone marrow, lymph node, and in T-cells within the lamina propria of the small intestine. Detected on CD4+ and CD8+ T-cells, bone marrow-derived dendritic cells (BMDCs), peritoneal macrophages, neutrophils, and natural killer (NK) cells. In spleen and lymph nodes, highly expressed on CD4+ T-cell populations, and at lower levels on CD8+ T-cells. In thymus, has low expression on CD4+ cells and CD8+ cells, and not detected on CD4+CD8+ cells. Expressed in splenic and peritoneal CD11b cells. Not detected in most B cells and NK cells (at protein level). Also detected at lower levels in non-hematopoeitic tissues such as heart, brain, lung, kidney, muscle, ovary, and testis.

The protein resides in the cell membrane. Functionally, immunoregulatory receptor which inhibits the T-cell response. May promote differentiation of embryonic stem cells, by inhibiting BMP4 signaling. May stimulate MMP14-mediated MMP2 activation. In Mus musculus (Mouse), this protein is V-type immunoglobulin domain-containing suppressor of T-cell activation.